Here is a 628-residue protein sequence, read N- to C-terminus: Methionine--tRNA ligase (628 aa).

Residues 9 to 19 carry the 'HIGH' region motif; that stretch reads YYVNDVPHLGH. The Zn(2+) site is built by cysteine 124, cysteine 127, cysteine 142, and cysteine 145. Residues 294–298 carry the 'KMSKS' region motif; that stretch reads KMSKS. Lysine 297 is an ATP binding site. The tRNA-binding domain maps to 527–628; sequence DFAKIEIKVA…QLVQNGSLVG (102 aa).

It belongs to the class-I aminoacyl-tRNA synthetase family. MetG type 2A subfamily. Homodimer. Zn(2+) is required as a cofactor.

It localises to the cytoplasm. The catalysed reaction is tRNA(Met) + L-methionine + ATP = L-methionyl-tRNA(Met) + AMP + diphosphate. Functionally, is required not only for elongation of protein synthesis but also for the initiation of all mRNA translation through initiator tRNA(fMet) aminoacylation. The chain is Methionine--tRNA ligase (metG) from Campylobacter jejuni subsp. jejuni serotype O:2 (strain ATCC 700819 / NCTC 11168).